Reading from the N-terminus, the 256-residue chain is tRNA (guanine-N(7)-)-methyltransferase (256 aa).

The tract at residues 1-43 (MDVDPVNSEMELDNKPTCETVPGLPQKKHYRQRAHSNPHSDHD) is disordered. The span at 26 to 36 (QKKHYRQRAHS) shows a compositional bias: basic residues. S-adenosyl-L-methionine-binding positions include Gly74, 97–98 (EI), 132–133 (NA), and Leu152. Asp155 is an active-site residue. 230-232 (TEE) serves as a coordination point for S-adenosyl-L-methionine.

This sequence belongs to the class I-like SAM-binding methyltransferase superfamily. TrmB family.

The protein localises to the nucleus. The enzyme catalyses guanosine(46) in tRNA + S-adenosyl-L-methionine = N(7)-methylguanosine(46) in tRNA + S-adenosyl-L-homocysteine. Its pathway is tRNA modification; N(7)-methylguanine-tRNA biosynthesis. Functionally, catalyzes the formation of N(7)-methylguanine at position 46 (m7G46) in tRNA. In Caenorhabditis briggsae, this protein is tRNA (guanine-N(7)-)-methyltransferase.